The following is a 365-amino-acid chain: Tubulin-like protein CetZ (365 aa).

Residues 10-14 (QCGTK), 103-105 (GTG), E136, N163, and N181 contribute to the GTP site.

This sequence belongs to the CetZ family.

It localises to the cytoplasm. Its function is as follows. Involved in cell shape control. The protein is Tubulin-like protein CetZ of Pyrococcus horikoshii (strain ATCC 700860 / DSM 12428 / JCM 9974 / NBRC 100139 / OT-3).